Reading from the N-terminus, the 307-residue chain is Ribonuclease HII (307 aa).

The RNase H type-2 domain maps to 44 to 235 (EPVAGVDEAG…VRRAGGRMEL (192 aa)). Positions 50, 51, and 144 each coordinate a divalent metal cation. The disordered stretch occupies residues 241 to 307 (ADSDDSPGFA…SRPAELLEIP (67 aa)). A compositionally biased stretch (low complexity) spans 250–280 (ASGPAEAVPGPAGSAGAASAAARPAAAGPAG). Over residues 287–296 (RAADLRDNGD) the composition is skewed to basic and acidic residues.

It belongs to the RNase HII family. The cofactor is Mn(2+). It depends on Mg(2+) as a cofactor.

It is found in the cytoplasm. The enzyme catalyses Endonucleolytic cleavage to 5'-phosphomonoester.. Functionally, endonuclease that specifically degrades the RNA of RNA-DNA hybrids. The polypeptide is Ribonuclease HII (Acidothermus cellulolyticus (strain ATCC 43068 / DSM 8971 / 11B)).